A 515-amino-acid chain; its full sequence is Vacuolar segregation protein PEP7 (515 aa).

A C2H2-type zinc finger spans residues 6-29 (VSCPICLRKFDNLQALNAHLDVEH). A disordered region spans residues 36–58 (DSLGSNDSRLVNGKQKKARSVDS). The FYVE-type 1; atypical zinc-finger motif lies at 72 to 137 (KKGKSCCHTC…CCHDCFVTKP (66 aa)). 16 residues coordinate Zn(2+): Cys78, Cys81, Cys94, Cys97, Cys102, His105, Cys129, Cys132, Cys221, Cys224, Cys237, Cys240, Cys245, Cys252, Cys289, and Cys292. An FYVE-type 2 zinc finger spans residues 215–297 (DRSVLFCNIC…LCSHCIDMLF (83 aa)).

In terms of assembly, interacts with VPS21, VPS45, PEP3 and PEP5.

It localises to the vacuole membrane. Required for vacuole segregation and vacuole protein sorting. Possibly part of a complex which tethers the vacuole membrane to microtubules, either directly or via kinesin or dynein-like motor proteins. Probably functions in several interorganelle traffic pathways. This is Vacuolar segregation protein PEP7 (PEP7) from Saccharomyces cerevisiae (strain ATCC 204508 / S288c) (Baker's yeast).